The chain runs to 382 residues: Intermediate transcription factor 3 large subunit (382 aa).

It belongs to the orthopoxvirus OPG150 family. Heterodimerizes with protein A8 to form the virus intermediate transcription factor (VITF)-3.

In terms of biological role, acts with RNA polymerase to initiate transcription from intermediate gene promoters. The protein is Intermediate transcription factor 3 large subunit (OPG150) of Cynomys gunnisoni (Gunnison's prairie dog).